Here is a 928-residue protein sequence, read N- to C-terminus: MEGAGENAPESSSSAPGSEESARDPQVPPPEEESGDCARSLEAVPKKLCGYLSKFGGKGPIRGWKSRWFFYDERKCQLYYSRTAQDANPLDSIDLSSAVFDCKADAEEGIFEIKTPSRVITLKAATKQAMLYWLQQLQMKRWEFHNSPPAPPATPDAALAGNGPVLHLELGQEEAELEEFLCPVKTPPGLVGVAAALQPFPALQNISLKHLGTEIQNTMHNIRGNKQAQGTGHEPPGEDSPQSGEPQREEQPLASDASTPGREPEDSPKPAPKPSLTISFAQKAKRQNNTFPFFSEGITRNRTAQEKVAALEQQVLMLTKELKSQKELVKILHKALEAAQQEKRASSAYLAAAEDKDRLELVRHKVRQIAELGRRVEALEQERESLAHTASLREQQVQELQQHVQLLMDKNHAKQQVICKLSEKVTQDFTHPPDQSPLRPDAANRDFLSQQGKIEHLKDDMEAYRTQNCFLNSEIHQVTKIWRKVAEKEKALLTKCAYLQARNCQVESKYLAGLRRLQEALGDEASECSELLRQLVQEALQWEAGEASSDSIELSPISKYDEYGFLTVPDYEVEDLKLLAKIQALESRSHHLLGLEAVDRPLRERWAALGDLVPSAELKQLLRAGVPREHRPRVWRWLVHLRVQHLHTPGCYQELLSRGQAREHPAARQIELDLNRTFPNNKHFTCPTSSFPDKLRRVLLAFSWQNPTIGYCQGLNRLAAIALLVLEEEESAFWCLVAIVETIMPADYYCNTLTASQVDQRVLQDLLSEKLPRLMAHLGQHHVDLSLVTFNWFLVVFADSLISNILLRVWDAFLYEGTKVVFRYALAIFKYNEKEILRLQNGLEIYQYLRFFTKTISNSRKLMNIAFNDMNPFRMKQLRQLRMVHRERLEAELRELEQLKAEYLERRASRRRAVSEGCASEDEVEGEA.

Methionine 1 carries the post-translational modification N-acetylmethionine. Low complexity predominate over residues 1–19 (MEGAGENAPESSSSAPGSE). The interval 1 to 39 (MEGAGENAPESSSSAPGSEESARDPQVPPPEEESGDCAR) is disordered. The interaction with CADH1 stretch occupies residues 1–169 (MEGAGENAPE…AGNGPVLHLE (169 aa)). The PH domain occupies 45–142 (PKKLCGYLSK…WLQQLQMKRW (98 aa)). The tract at residues 225 to 275 (NKQAQGTGHEPPGEDSPQSGEPQREEQPLASDASTPGREPEDSPKPAPKPS) is disordered. The interval 295-433 (SEGITRNRTA…KVTQDFTHPP (139 aa)) is interaction with RAC1. Positions 298-416 (ITRNRTAQEK…LMDKNHAKQQ (119 aa)) form a coiled coil. Serine 436 carries the post-translational modification Phosphoserine. The Rab-GAP TBC domain occupies 625 to 817 (GVPREHRPRV…RVWDAFLYEG (193 aa)). Residues 875–913 (MKQLRQLRMVHRERLEAELRELEQLKAEYLERRASRRRA) adopt a coiled-coil conformation. Serine 915 and serine 920 each carry phosphoserine.

As to quaternary structure, interacts with activated RAC1 and CDH1. Expressed in a broad range of tissues, especially in kidney, liver, lung and placenta. Also expressed in keratinocytes and epithelia-containing organs. Isoform 2 is differentially expressed in prostate normal and cancer cells (at protein level).

Its subcellular location is the cytoplasm. The protein resides in the cytoplasmic vesicle. It localises to the cell junction. Acts as a GTPase-activating protein for RAB7A. Signal effector acting as a linker between RAC1 and RAB7A, leading to RAB7A inactivation and subsequent inhibition of cadherin degradation and reduced cell-cell adhesion. The protein is TBC1 domain family member 2A (TBC1D2) of Homo sapiens (Human).